A 190-amino-acid polypeptide reads, in one-letter code: dCTP deaminase, dUMP-forming (190 aa).

Residues 101–106, Asp119, 127–129, Gln148, Tyr162, and Gln174 each bind dCTP; these read KSSLGR and TLE. Glu129 acts as the Proton donor/acceptor in catalysis. Positions 161–190 are disordered; that stretch reads PYGSSGVGSKYQGQRGPTPSRSYQNFIRST. The span at 171 to 190 shows a compositional bias: polar residues; sequence YQGQRGPTPSRSYQNFIRST.

It belongs to the dCTP deaminase family. As to quaternary structure, homotrimer.

It catalyses the reaction dCTP + 2 H2O = dUMP + NH4(+) + diphosphate. Its pathway is pyrimidine metabolism; dUMP biosynthesis; dUMP from dCTP: step 1/1. In terms of biological role, bifunctional enzyme that catalyzes both the deamination of dCTP to dUTP and the hydrolysis of dUTP to dUMP without releasing the toxic dUTP intermediate. This chain is dCTP deaminase, dUMP-forming, found in Mycobacterium ulcerans (strain Agy99).